A 193-amino-acid chain; its full sequence is Glycerol-3-phosphate acyltransferase (193 aa).

Transmembrane regions (helical) follow at residues Leu2 to Val22, Val76 to Phe96, Leu112 to Phe132, and Cys152 to Ile172.

The protein belongs to the PlsY family. As to quaternary structure, probably interacts with PlsX.

It localises to the cell membrane. It catalyses the reaction an acyl phosphate + sn-glycerol 3-phosphate = a 1-acyl-sn-glycero-3-phosphate + phosphate. It participates in lipid metabolism; phospholipid metabolism. Its function is as follows. Catalyzes the transfer of an acyl group from acyl-phosphate (acyl-PO(4)) to glycerol-3-phosphate (G3P) to form lysophosphatidic acid (LPA). This enzyme utilizes acyl-phosphate as fatty acyl donor, but not acyl-CoA or acyl-ACP. This is Glycerol-3-phosphate acyltransferase from Bacillus velezensis (strain DSM 23117 / BGSC 10A6 / LMG 26770 / FZB42) (Bacillus amyloliquefaciens subsp. plantarum).